A 550-amino-acid polypeptide reads, in one-letter code: Solute carrier family 22 member 6 (550 aa).

Over 1–9 (MAFNDLLQQ) the chain is Cytoplasmic. Residues 10–30 (VGGVGRFQQIQVTLVVLPLLL) traverse the membrane as a helical segment. Residues 31 to 135 (MASHNTVQNF…LVCSHRALRQ (105 aa)) lie on the Extracellular side of the membrane. 3 N-linked (GlcNAc...) asparagine glycosylation sites follow: N56, N92, and N113. The helical transmembrane segment at 136 to 156 (LAQSLYMVGVLLGAMVFGYLA) threads the bilayer. At 157-164 (DRLGRRKV) the chain is on the cytoplasmic side. The helical transmembrane segment at 165–187 (LILNYLQTAVSGTCAAFAPNFPI) threads the bilayer. Over 188–190 (YCA) the chain is Extracellular. Residues 191–213 (FRLLSGMSLAGIALNCMTLNVEW) form a helical membrane-spanning segment. The Cytoplasmic portion of the chain corresponds to 214–224 (MPIHTRACVGT). The helical transmembrane segment at 225-245 (LIGYVYSLGQFLLAGVAYAVP) threads the bilayer. Residues 246-248 (HWR) are Extracellular-facing. Residues 249-269 (HLQLLISVPFFAFFIYSWFFI) form a helical membrane-spanning segment. The Cytoplasmic segment spans residues 270 to 337 (ESARWHSSSG…ELLRCPTLRH (68 aa)). The chain crosses the membrane as a helical span at residues 338–358 (LFLCLSMLWFATSFAYYGLVM). The Extracellular portion of the chain corresponds to 359-368 (DLQGFGVSIY). A helical membrane pass occupies residues 369–389 (LIQVIFGAVDLPAKLVGFLVI). At 390-395 (NSLGRR) the chain is on the cytoplasmic side. A helical transmembrane segment spans residues 396 to 416 (PAQMAALLLAGICILLNGVVP). At 417–425 (QDQSVIRTS) the chain is on the extracellular side. A helical transmembrane segment spans residues 426-446 (LAVLGKGCLAASFNCIFLYTG). The Cytoplasmic segment spans residues 447–456 (ELYPTMIRQT). Residues 457-477 (GLGMGSTMARVGSIVSPLVSM) form a helical membrane-spanning segment. The Extracellular segment spans residues 478–484 (TTELYPS). Residues 485–505 (VPLFIYGAVPVAASAVTVLLP) form a helical membrane-spanning segment. Topologically, residues 506–550 (ETLGQPLPDTVQDLESRKGKQTPQQQEHQKYMVPLQASAQEKNGL) are cytoplasmic. A disordered region spans residues 513 to 550 (PDTVQDLESRKGKQTPQQQEHQKYMVPLQASAQEKNGL).

It belongs to the major facilitator (TC 2.A.1) superfamily. Organic cation transporter (TC 2.A.1.19) family. Glycosylated. Glycosylation is necessary for proper targeting of the transporter to the plasma membrane. In terms of tissue distribution, expressed in kidney; in the basolateral membrane of the proximal tubule.

It is found in the basolateral cell membrane. The protein resides in the basal cell membrane. The enzyme catalyses (6R)-L-erythro-5,6,7,8-tetrahydrobiopterin(out) + a dicarboxylate(in) = (6R)-L-erythro-5,6,7,8-tetrahydrobiopterin(in) + a dicarboxylate(out). The catalysed reaction is L-erythro-7,8-dihydrobiopterin(out) + a dicarboxylate(in) = L-erythro-7,8-dihydrobiopterin(in) + a dicarboxylate(out). It catalyses the reaction L-sepiapterin(out) + a dicarboxylate(in) = L-sepiapterin(in) + a dicarboxylate(out). It carries out the reaction prostaglandin F2alpha(out) + a dicarboxylate(in) = prostaglandin F2alpha(in) + a dicarboxylate(out). The enzyme catalyses prostaglandin E2(out) + a dicarboxylate(in) = prostaglandin E2(in) + a dicarboxylate(out). The catalysed reaction is 3',5'-cyclic AMP(out) + a dicarboxylate(in) = 3',5'-cyclic AMP(in) + a dicarboxylate(out). It catalyses the reaction 3',5'-cyclic GMP(out) + a dicarboxylate(in) = 3',5'-cyclic GMP(in) + a dicarboxylate(out). It carries out the reaction urate(out) + a dicarboxylate(in) = urate(in) + a dicarboxylate(out). The enzyme catalyses kynurenate(out) + glutarate(in) = kynurenate(in) + glutarate(out). The catalysed reaction is (indol-3-yl)acetate(out) + a dicarboxylate(in) = (indol-3-yl)acetate(in) + a dicarboxylate(out). It catalyses the reaction indoxyl sulfate(out) + a dicarboxylate(in) = indoxyl sulfate(in) + a dicarboxylate(out). It carries out the reaction N-benzoylglycine(out) + a dicarboxylate(in) = N-benzoylglycine(in) + a dicarboxylate(out). The enzyme catalyses 3-carboxy-4-methyl-5-propyl-2-furanpropanoate(out) + a dicarboxylate(in) = 3-carboxy-4-methyl-5-propyl-2-furanpropanoate(in) + a dicarboxylate(out). Its function is as follows. Secondary active transporter that functions as a Na(+)-independent organic anion (OA)/dicarboxylate antiporter where the uptake of one molecule of OA into the cell is coupled with an efflux of one molecule of intracellular dicarboxylate such as 2-oxoglutarate or glutarate. Mediates the uptake of OA across the basolateral side of proximal tubule epithelial cells, thereby contributing to the renal elimination of endogenous OA from the systemic circulation into the urine. Functions as a biopterin transporters involved in the uptake and the secretion of coenzymes tetrahydrobiopterin (BH4), dihydrobiopterin (BH2) and sepiapterin to urine, thereby determining baseline levels of blood biopterins. Transports prostaglandin E2 (PGE2) and prostaglandin F2-alpha (PGF2-alpha) and may contribute to their renal excretion. Also mediates the uptake of cyclic nucleotides such as cAMP and cGMP. Involved in the transport of neuroactive tryptophan metabolites kynurenate (KYNA) and xanthurenate (XA) and may contribute to their secretion from the brain. May transport glutamate. Also involved in the disposition of uremic toxins and potentially toxic xenobiotics by the renal organic anion secretory pathway, helping reduce their undesired toxicological effects on the body. Uremic toxins include the indoxyl sulfate (IS), hippurate/N-benzoylglycine (HA), indole acetate (IA), 3-carboxy-4- methyl-5-propyl-2-furanpropionate (CMPF) and urate. Xenobiotics include the mycotoxin ochratoxin (OTA). May also contribute to the transport of organic compounds in testes across the blood-testis-barrier. This Macaca fascicularis (Crab-eating macaque) protein is Solute carrier family 22 member 6.